Consider the following 338-residue polypeptide: MKTTAWTIGDIHGIGPEIILKTFDESLRSTGQPEEKPIVIGSAEALLYYSKRLGLSIDIRTIDAPEKAAAYPQGVLPVISVGEPSSPLQPGTISAEAGRLSMLAIEKAANLCLEGRCAAMVTAPIHKEAVARAGYPHTGHTDFLADLCATDNPTMLFRDPVSGLMVALATIHVALHRVPELIRSMDMSAFFSNLNRSLQSDFRIEQPRIAVLGLNPHASDGGVMGREEKEIILPCIDALADRQNIEGPFAADGFFGSGKYRNYDVTVAMYHDQGLLPFKVLAFDTGINVTLGLPLVRTSPDHGTSFDIAGQGRASHRSFSEAAKLAWEIAFNRLMEHS.

Residues histidine 140 and threonine 141 each coordinate substrate. The a divalent metal cation site is built by histidine 172, histidine 217, and histidine 271. Positions 279, 288, and 297 each coordinate substrate.

This sequence belongs to the PdxA family. As to quaternary structure, homodimer. It depends on a divalent metal cation as a cofactor.

Its subcellular location is the cytoplasm. It catalyses the reaction 4-(phosphooxy)-L-threonine + NAD(+) = 3-amino-2-oxopropyl phosphate + CO2 + NADH. It functions in the pathway cofactor biosynthesis; pyridoxine 5'-phosphate biosynthesis; pyridoxine 5'-phosphate from D-erythrose 4-phosphate: step 4/5. In terms of biological role, catalyzes the NAD(P)-dependent oxidation of 4-(phosphooxy)-L-threonine (HTP) into 2-amino-3-oxo-4-(phosphooxy)butyric acid which spontaneously decarboxylates to form 3-amino-2-oxopropyl phosphate (AHAP). The protein is 4-hydroxythreonine-4-phosphate dehydrogenase of Prosthecochloris aestuarii (strain DSM 271 / SK 413).